Here is a 476-residue protein sequence, read N- to C-terminus: BTB/POZ domain-containing protein KCTD8 (476 aa).

One can recognise a BTB domain in the interval 44–122; the sequence is EVVELNVGGQ…LRDKQLALPE (79 aa). Phosphoserine is present on serine 78. Arginine 80 carries the omega-N-methylarginine modification. Residues 331-412 form a disordered region; it reads SPKQEHEDRK…WMPPPDKRRN (82 aa). A compositionally biased stretch (basic and acidic residues) spans 333–349; sequence KQEHEDRKRDKVTDKGS. Over residues 350–391 the composition is skewed to polar residues; sequence ESGTSCNELSTSSCDSHSEASTPQDNPANTQQAAAHQPNTLT. The residue at position 413 (serine 413) is a Phosphoserine.

In terms of assembly, interacts as a tetramer with GABBR1 and GABBR2.

The protein localises to the presynaptic cell membrane. Its subcellular location is the postsynaptic cell membrane. Functionally, auxiliary subunit of GABA-B receptors that determine the pharmacology and kinetics of the receptor response. Increases agonist potency and markedly alter the G-protein signaling of the receptors by accelerating onset and promoting desensitization. The protein is BTB/POZ domain-containing protein KCTD8 (Kctd8) of Mus musculus (Mouse).